We begin with the raw amino-acid sequence, 211 residues long: Protein U63 (211 aa).

Belongs to the herpesviridae UL92 family.

The protein is Protein U63 (U63) of Human herpesvirus 7 (strain JI) (HHV-7).